The primary structure comprises 207 residues: Casparian strip membrane protein 1 (207 aa).

Position 2 is an N-acetylalanine (Ala2). Residues 2–44 (AKESTTIDVGEPNTMTKSTSHVVVDEKKKKGFVAAAAGGGYKR) lie on the Cytoplasmic side of the membrane. A helical transmembrane segment spans residues 45–65 (GLAVFDFLLRLAAIGITIGAS). At 66-95 (SVMFTAEETLPFFTQFLQFQAGYDDFPTFQ) the chain is on the extracellular side. The chain crosses the membrane as a helical span at residues 96-116 (FFVIAIAIVASYLVLSLPFSI). Over 117–128 (VTIVRPLAVAPR) the chain is Cytoplasmic. A helical transmembrane segment spans residues 129 to 149 (LILLISDTVVLTLTTAAAAAA). At 150-181 (ASIVYLAHNGNTNTNWLPICQQFGDFCQTAST) the chain is on the extracellular side. The chain crosses the membrane as a helical span at residues 182 to 202 (AVVAASISVAFFVLLIVISAI). Over 203 to 207 (ALKRH) the chain is Cytoplasmic.

The protein belongs to the Casparian strip membrane proteins (CASP) family. Homodimer and heterodimers.

It localises to the cell membrane. Regulates membrane-cell wall junctions and localized cell wall deposition. Required for establishment of the Casparian strip membrane domain (CSD) and the subsequent formation of Casparian strips, a cell wall modification of the root endodermis that determines an apoplastic barrier between the intraorganismal apoplasm and the extraorganismal apoplasm and prevents lateral diffusion. The protein is Casparian strip membrane protein 1 of Raphanus raphanistrum (Wild radish).